Here is a 929-residue protein sequence, read N- to C-terminus: Diacylglycerol kinase zeta (929 aa).

Positions 1–14 are enriched in basic and acidic residues; that stretch reads MEPRDPSPEARSSD. Disordered regions lie at residues 1 to 46 and 59 to 80; these read MEPR…RRFP and KSGL…GESE. A compositionally biased stretch (low complexity) spans 15-24; that stretch reads SESASASSSG. Positions 25–37 are enriched in basic and acidic residues; that stretch reads SERDADPEPDKAP. 2 consecutive Phorbol-ester/DAG-type zinc fingers follow at residues 98 to 153 and 173 to 231; these read HIWF…NFRC and HHWV…EEPC. A disordered region spans residues 257–281; it reads KASKKKKRASFKRRSSKKGPEEGRW. Residues 258–273 show a composition bias toward basic residues; sequence ASKKKKRASFKRRSSK. Positions 279–417 are mediates interaction with RASGRP1; that stretch reads GRWRPFIIRP…HVEEGNVVQL (139 aa). The region spanning 292 to 426 is the DAGKc domain; it reads PLMKPLLVFV…LDRWDLRAEP (135 aa). The short motif at 362 to 370 is the Nuclear export signal element; the sequence is LSTLDQLRL. Residues 421–441 form a disordered region; the sequence is DLRAEPNPEAGPEERDDGATD. Position 706 is a phosphoserine (Ser-706). Residues 760–783 form a disordered region; sequence ARPDLPTPTSPLPASPCSPTPGSL. Residues 764–778 are compositionally biased toward pro residues; it reads LPTPTSPLPASPCSP. Ser-782 bears the Phosphoserine mark. ANK repeat units lie at residues 823–853 and 858–887; these read QSRT…EILD and NGET…SLMK. A PDZ-binding motif is present at residues 925–929; that stretch reads QETAV.

Belongs to the eukaryotic diacylglycerol kinase family. Interacts (via PDZ-binding motif) with the PDZ domain of the syntrophin SNTG1 and that of SNX27. Interacts with IRS1 in the absence of insulin; insulin stimulation decreases this interaction. Found in a ternary complex with IRS1 and PIP5K1A in the absence of insulin. Interacts with PIP5K1A. Forms a signaling complex with RASGRP1 and HRAS.

The protein localises to the nucleus. It localises to the cytoplasm. It is found in the cytosol. The protein resides in the cell membrane. Its subcellular location is the cell projection. The protein localises to the lamellipodium. It carries out the reaction a 1,2-diacyl-sn-glycerol + ATP = a 1,2-diacyl-sn-glycero-3-phosphate + ADP + H(+). It catalyses the reaction a 1-O-alkyl-sn-glycerol + ATP = a 1-O-alkyl-sn-glycero-3-phosphate + ADP + H(+). The enzyme catalyses 1-O-alkyl-2-acyl-sn-glycerol + ATP = 1-O-alkyl-2-acyl-sn-glycero-3-phosphate + ADP + H(+). The catalysed reaction is 1,2-didecanoyl-sn-glycerol + ATP = 1,2-didecanoyl-sn-glycero-3-phosphate + ADP + H(+). It carries out the reaction 1,2-ditetradecanoyl-sn-glycerol + ATP = 1,2-ditetradecanoyl-sn-glycero-3-phosphate + ADP + H(+). It catalyses the reaction 1-hexadecanoyl-2-(9Z-octadecenoyl)-sn-glycerol + ATP = 1-hexadecanoyl-2-(9Z-octadecenoyl)-sn-glycero-3-phosphate + ADP + H(+). The enzyme catalyses 1-hexadecanoyl-2-(5Z,8Z,11Z,14Z-eicosatetraenoyl)-sn-glycerol + ATP = 1-hexadecanoyl-2-(5Z,8Z,11Z,14Z-eicosatetraenoyl)-sn-glycero-3-phosphate + ADP + H(+). The catalysed reaction is 1-octadecanoyl-2-(9Z-octadecenoyl)-sn-glycerol + ATP = 1-octadecanoyl-2-(9Z-octadecenoyl)-sn-glycero-3-phosphate + ADP + H(+). It carries out the reaction 1-octadecanoyl-2-(5Z,8Z,11Z,14Z-eicosatetraenoyl)-sn-glycerol + ATP = 1-octadecanoyl-2-(5Z,8Z,11Z,14Z-eicosatetraenoyl)-sn-glycero-3-phosphate + ADP + H(+). It catalyses the reaction 1-octadecanoyl-2-(4Z,7Z,10Z,13Z,16Z,19Z-docosahexaenoyl)-sn-glycerol + ATP = 1-octadecanoyl-2-(4Z,7Z,10Z,13Z,16Z,19Z-docosahexaenoyl)-sn-glycero-3-phosphate + ADP + H(+). The enzyme catalyses 1,2-di-(9Z-octadecenoyl)-sn-glycerol + ATP = 1,2-di-(9Z-octadecenoyl)-sn-glycero-3-phosphate + ADP + H(+). The catalysed reaction is 1-(9Z-octadecenoyl)-2-hexadecanoyl-sn-glycerol + ATP = 1-(9Z)-octadecenoyl-2-hexadecanoyl-sn-glycero-3-phosphate + ADP + H(+). It carries out the reaction 1-eicosanoyl-2-(5Z,8Z,11Z,14Z)-eicosatetraenoyl-sn-glycerol + ATP = 1-eicosanoyl-2-(5Z,8Z,11Z,14Z)-eicosatetraenoyl-sn-glycero-3-phosphate + ADP + H(+). It catalyses the reaction 1,2-di-(5Z,8Z,11Z,14Z)-eicosatetraenoyl-sn-glycerol + ATP = 1,2-di-(5Z,8Z,11Z,14Z)-eicosatetraenoyl-sn-glycero-3-phosphate + ADP + H(+). The enzyme catalyses 1-O-hexadecyl-2-acetyl-sn-glycerol + ATP = 1-O-hexadecyl-2-acetyl-sn-glycero-3-phosphate + ADP + H(+). The catalysed reaction is 1-O-hexadecyl-2-(5Z,8Z,11Z,14Z-eicosatetraenoyl)-sn-glycerol + ATP = 1-O-hexadecyl-2-(5Z,8Z,11Z,14Z-eicosatetraenoyl)-sn-glycero-3-phosphate + ADP + H(+). It carries out the reaction 1-O-hexadecyl-2-(9Z-octadecenoyl)-sn-glycerol + ATP = 1-O-hexadecyl-2-(9Z-octadecenoyl)-sn-glycero-3-phosphate + ADP + H(+). It catalyses the reaction 1-O-hexadecyl-sn-glycerol + ATP = 1-O-hexadecyl-sn-glycero-3-phosphate + ADP + H(+). It functions in the pathway lipid metabolism; glycerolipid metabolism. Functionally, diacylglycerol kinase that converts diacylglycerol/DAG into phosphatidic acid/phosphatidate/PA and regulates the respective levels of these two bioactive lipids. Thereby, acts as a central switch between the signaling pathways activated by these second messengers with different cellular targets and opposite effects in numerous biological processes. Also plays an important role in the biosynthesis of complex lipids. Does not exhibit an acyl chain-dependent substrate specificity among diacylglycerol species. Can also phosphorylate 1-alkyl-2-acylglycerol in vitro but less efficiently and with a preference for alkylacylglycerols containing an arachidonoyl group. The biological processes it is involved in include T cell activation since it negatively regulates T-cell receptor signaling which is in part mediated by diacylglycerol. By generating phosphatidic acid, stimulates PIP5KIA activity which regulates actin polymerization. Through the same mechanism could also positively regulate insulin-induced translocation of SLC2A4 to the cell membrane. Regulates RASGRP1 activity. The chain is Diacylglycerol kinase zeta from Rattus norvegicus (Rat).